The chain runs to 233 residues: Ion-translocating oxidoreductase complex subunit E (233 aa).

6 consecutive transmembrane segments (helical) span residues 18–38 (ALVQ…ATNA), 39–59 (LGLG…VSAL), 69–89 (IPIY…LINA), 92–112 (FGLY…CIVI), 128–148 (ALDG…LGAL), and 182–202 (PFLL…LLAG).

The protein belongs to the NqrDE/RnfAE family. The complex is composed of six subunits: RnfA, RnfB, RnfC, RnfD, RnfE and RnfG.

It localises to the cell inner membrane. Part of a membrane-bound complex that couples electron transfer with translocation of ions across the membrane. This is Ion-translocating oxidoreductase complex subunit E from Yersinia pestis bv. Antiqua (strain Angola).